A 122-amino-acid polypeptide reads, in one-letter code: Large ribosomal subunit protein uL14 (122 aa).

This sequence belongs to the universal ribosomal protein uL14 family. Part of the 50S ribosomal subunit. Forms a cluster with proteins L3 and L19. In the 70S ribosome, L14 and L19 interact and together make contacts with the 16S rRNA in bridges B5 and B8.

Functionally, binds to 23S rRNA. Forms part of two intersubunit bridges in the 70S ribosome. In Bordetella avium (strain 197N), this protein is Large ribosomal subunit protein uL14.